A 397-amino-acid polypeptide reads, in one-letter code: Tryptophan synthase beta chain (397 aa).

Residue Lys-91 is modified to N6-(pyridoxal phosphate)lysine.

Belongs to the TrpB family. In terms of assembly, tetramer of two alpha and two beta chains. Requires pyridoxal 5'-phosphate as cofactor.

It carries out the reaction (1S,2R)-1-C-(indol-3-yl)glycerol 3-phosphate + L-serine = D-glyceraldehyde 3-phosphate + L-tryptophan + H2O. Its pathway is amino-acid biosynthesis; L-tryptophan biosynthesis; L-tryptophan from chorismate: step 5/5. Functionally, the beta subunit is responsible for the synthesis of L-tryptophan from indole and L-serine. The sequence is that of Tryptophan synthase beta chain from Bacillus anthracis (strain A0248).